The chain runs to 327 residues: DNA-directed RNA polymerase subunit alpha (327 aa).

The alpha N-terminal domain (alpha-NTD) stretch occupies residues 1–243 (MEKFLKYEIK…EHLNPIVNVN (243 aa)). Residues 260–327 (RVRSFAKQIE…VHELGLKLRS (68 aa)) are alpha C-terminal domain (alpha-CTD).

Belongs to the RNA polymerase alpha chain family. As to quaternary structure, homodimer. The RNAP catalytic core consists of 2 alpha, 1 beta, 1 beta' and 1 omega subunit. When a sigma factor is associated with the core the holoenzyme is formed, which can initiate transcription.

It catalyses the reaction RNA(n) + a ribonucleoside 5'-triphosphate = RNA(n+1) + diphosphate. In terms of biological role, DNA-dependent RNA polymerase catalyzes the transcription of DNA into RNA using the four ribonucleoside triphosphates as substrates. The sequence is that of DNA-directed RNA polymerase subunit alpha from Mycoplasma pneumoniae (strain ATCC 29342 / M129 / Subtype 1) (Mycoplasmoides pneumoniae).